The primary structure comprises 174 residues: Transcription antitermination protein NusB (174 aa).

Residues 1 to 28 (MVEPKKPFMRKPPPKTGDKKPGDRKANR) are disordered. Over residues 16-25 (TGDKKPGDRK) the composition is skewed to basic and acidic residues.

It belongs to the NusB family.

Its function is as follows. Involved in transcription antitermination. Required for transcription of ribosomal RNA (rRNA) genes. Binds specifically to the boxA antiterminator sequence of the ribosomal RNA (rrn) operons. This Rhodopseudomonas palustris (strain BisB5) protein is Transcription antitermination protein NusB.